The primary structure comprises 601 residues: Group B oligopeptidase PepB (601 aa).

Position 386 (His386) interacts with Zn(2+). Glu387 is a catalytic residue. The Zn(2+) site is built by His390 and His393.

This sequence belongs to the peptidase M3B family. Requires Zn(2+) as cofactor.

It localises to the cytoplasm. In terms of biological role, has oligopeptidase activity and degrades a variety of small bioactive peptides, including bradykinin, neurotensin, and peptide fragments of substance P and adrenocorticotropin. Also hydrolyzes the synthetic collagen-like substrate N-(3-[2-furyl]acryloyl)-Leu-Gly-Pro-Ala (FALGPA). The chain is Group B oligopeptidase PepB (pepB) from Streptococcus agalactiae serotype III (strain NEM316).